The following is a 191-amino-acid chain: UPF0312 protein Shewana3_1179 (191 aa).

The first 22 residues, 1–22 (MKKQLLAALIGGSLLAPMAASA), serve as a signal peptide directing secretion.

Belongs to the UPF0312 family. Type 1 subfamily.

Its subcellular location is the periplasm. In Shewanella sp. (strain ANA-3), this protein is UPF0312 protein Shewana3_1179.